Consider the following 346-residue polypeptide: uncharacterized protein (346 aa).

This is an uncharacterized protein from Borreliella burgdorferi (strain ATCC 35210 / DSM 4680 / CIP 102532 / B31) (Borrelia burgdorferi).